Reading from the N-terminus, the 171-residue chain is N5-carboxyaminoimidazole ribonucleotide mutase (171 aa).

The substrate site is built by serine 10, aspartate 13, and arginine 40.

Belongs to the AIR carboxylase family. Class I subfamily.

The enzyme catalyses 5-carboxyamino-1-(5-phospho-D-ribosyl)imidazole + H(+) = 5-amino-1-(5-phospho-D-ribosyl)imidazole-4-carboxylate. The protein operates within purine metabolism; IMP biosynthesis via de novo pathway; 5-amino-1-(5-phospho-D-ribosyl)imidazole-4-carboxylate from 5-amino-1-(5-phospho-D-ribosyl)imidazole (N5-CAIR route): step 2/2. Catalyzes the conversion of N5-carboxyaminoimidazole ribonucleotide (N5-CAIR) to 4-carboxy-5-aminoimidazole ribonucleotide (CAIR). The chain is N5-carboxyaminoimidazole ribonucleotide mutase from Thermotoga maritima (strain ATCC 43589 / DSM 3109 / JCM 10099 / NBRC 100826 / MSB8).